The chain runs to 94 residues: Protein SpdA (94 aa).

A helical transmembrane segment spans residues 41 to 68; it reads GPILLALVAAGGSVGVVMTLCLLLQTAA.

Its subcellular location is the cell membrane. In terms of biological role, involved in plasmid transfer. The sequence is that of Protein SpdA (spdA) from Streptomyces lividans.